The chain runs to 413 residues: MHFINEFINRGYFYQSTDLTRLTQISNSSQIVAYIGFDCTAQSLHVGNLMQIMILRLLQQCGHKSIVVIGGATTKIGDPSEKDKLRRIITNDEIQQNISGIKRSLQKFIKFDETKNDVLLLNNQEWLDSINYINFLRDYGRAFSVNKMLTMNSVKSRLERHTPLSFLEFNYMLLQAYDFYYLNKYYNCNLQIGGSDQWGNITMGVDLVKKLSNNEVFGLTTPLMTNSSGEKMGKTVNGAVWLNEDMCSPYNYFQYWGNIEDNDVIRFAKLYGEFSEIELSKLTELLFNNVNEAKKQIAYKITLLCHGRDEANKALNTAIQMFEHKKADENLPTFTIKDCNNLKVGIPITELLVTIGLAKTKSEGKRLIQGNGIRINNIKVNNINLVVQLQDFIGQVITVSLGKKCHILVKIAK.

An L-tyrosine-binding site is contributed by tyrosine 34. The short motif at 39–48 is the 'HIGH' region element; sequence CTAQSLHVGN. L-tyrosine contacts are provided by tyrosine 171 and glutamine 175. The short motif at 231–235 is the 'KMSKS' region element; that stretch reads KMGKT. Lysine 234 serves as a coordination point for ATP. The 66-residue stretch at 346–411 folds into the S4 RNA-binding domain; it reads IPITELLVTI…GKKCHILVKI (66 aa).

This sequence belongs to the class-I aminoacyl-tRNA synthetase family. TyrS type 1 subfamily. As to quaternary structure, homodimer.

Its subcellular location is the cytoplasm. The enzyme catalyses tRNA(Tyr) + L-tyrosine + ATP = L-tyrosyl-tRNA(Tyr) + AMP + diphosphate + H(+). In terms of biological role, catalyzes the attachment of tyrosine to tRNA(Tyr) in a two-step reaction: tyrosine is first activated by ATP to form Tyr-AMP and then transferred to the acceptor end of tRNA(Tyr). In Orientia tsutsugamushi (strain Boryong) (Rickettsia tsutsugamushi), this protein is Tyrosine--tRNA ligase.